We begin with the raw amino-acid sequence, 786 residues long: Signal transducer and activator of transcription 5B (786 aa).

Tyr-90 bears the Phosphotyrosine mark. Residue Ser-128 is modified to Phosphoserine. The 98-residue stretch at 589-686 folds into the SH2 domain; sequence WNDGAILGFV…EVYSKYYTPV (98 aa). Phosphotyrosine is present on residues Tyr-682 and Tyr-699.

It belongs to the transcription factor STAT family. Upon activation, forms a homodimer or a heterodimer with a related family member. Binds NR3C1. Interacts with NCOA1. Interacts with SOCS7. Interacts (via SH2 domain) with INSR. Interacts with CPEB3; this inhibits STAT5B-mediated transcriptional activation. Tyrosine phosphorylated in response to signaling via activated KIT, resulting in translocation to the nucleus. Tyrosine phosphorylated in response to signaling via activated FLT3; wild-type FLT3 results in much weaker phosphorylation than constitutively activated mutant FLT3. Alternatively, can be phosphorylated by JAK2. Phosphorylation at Tyr-699 by PTK6 or HCK leads to an increase of its transcriptional activity. In terms of tissue distribution, in the virgin, found in most tissues. Particularly abundant in muscle tissue of virgin and lactating females, and of males.

It is found in the cytoplasm. The protein resides in the nucleus. Functionally, carries out a dual function: signal transduction and activation of transcription. Mediates cellular responses to the cytokine KITLG/SCF and other growth factors. Binds to the GAS element and activates PRL-induced transcription. Positively regulates hematopoietic/erythroid differentiation. The polypeptide is Signal transducer and activator of transcription 5B (Stat5b) (Mus musculus (Mouse)).